Reading from the N-terminus, the 445-residue chain is Tubulin beta chain (445 aa).

8 residues coordinate GTP: Gln11, Glu69, Ser138, Gly142, Thr143, Gly144, Asn204, and Asn226. Glu69 is a binding site for Mg(2+).

This sequence belongs to the tubulin family. As to quaternary structure, dimer of alpha and beta chains. A typical microtubule is a hollow water-filled tube with an outer diameter of 25 nm and an inner diameter of 15 nM. Alpha-beta heterodimers associate head-to-tail to form protofilaments running lengthwise along the microtubule wall with the beta-tubulin subunit facing the microtubule plus end conferring a structural polarity. Microtubules usually have 13 protofilaments but different protofilament numbers can be found in some organisms and specialized cells. The cofactor is Mg(2+).

The protein resides in the cytoplasm. Its subcellular location is the cytoskeleton. Functionally, tubulin is the major constituent of microtubules, a cylinder consisting of laterally associated linear protofilaments composed of alpha- and beta-tubulin heterodimers. Microtubules grow by the addition of GTP-tubulin dimers to the microtubule end, where a stabilizing cap forms. Below the cap, tubulin dimers are in GDP-bound state, owing to GTPase activity of alpha-tubulin. The polypeptide is Tubulin beta chain (TUB-2) (Schizophyllum commune (Split gill fungus)).